Consider the following 611-residue polypeptide: Putative clathrin assembly protein At4g02650 (611 aa).

An ENTH domain is found at 26 to 162; that stretch reads GRSSSLTELE…DYRMQGRRGK (137 aa). Disordered regions lie at residues 158–184 and 337–406; these read GRRG…HRGT and TTKS…GDLL. Over residues 386–401 the composition is skewed to basic and acidic residues; that stretch reads METKKDVEEVVSRQDQ.

It localises to the membrane. The protein localises to the clathrin-coated pit. Its subcellular location is the golgi apparatus. It is found in the cytoplasmic vesicle. The protein resides in the clathrin-coated vesicle. In Arabidopsis thaliana (Mouse-ear cress), this protein is Putative clathrin assembly protein At4g02650.